The sequence spans 265 residues: 4-hydroxy-tetrahydrodipicolinate reductase (265 aa).

Position 9-14 (9-14 (GPRGRM)) interacts with NAD(+). Position 37 (lysine 37) interacts with NADP(+). NAD(+) contacts are provided by residues 99–101 (GTT) and 125–128 (APNF). Histidine 155 serves as the catalytic Proton donor/acceptor. Residue histidine 156 coordinates (S)-2,3,4,5-tetrahydrodipicolinate. The active-site Proton donor is lysine 159. 165–166 (GT) contributes to the (S)-2,3,4,5-tetrahydrodipicolinate binding site. Residues 178–190 (RESQKQGHPKEEE) show a composition bias toward basic and acidic residues. The interval 178–200 (RESQKQGHPKEEETLPGARGADM) is disordered.

This sequence belongs to the DapB family.

It is found in the cytoplasm. It catalyses the reaction (S)-2,3,4,5-tetrahydrodipicolinate + NAD(+) + H2O = (2S,4S)-4-hydroxy-2,3,4,5-tetrahydrodipicolinate + NADH + H(+). The enzyme catalyses (S)-2,3,4,5-tetrahydrodipicolinate + NADP(+) + H2O = (2S,4S)-4-hydroxy-2,3,4,5-tetrahydrodipicolinate + NADPH + H(+). It participates in amino-acid biosynthesis; L-lysine biosynthesis via DAP pathway; (S)-tetrahydrodipicolinate from L-aspartate: step 4/4. Functionally, catalyzes the conversion of 4-hydroxy-tetrahydrodipicolinate (HTPA) to tetrahydrodipicolinate. This chain is 4-hydroxy-tetrahydrodipicolinate reductase, found in Oceanobacillus iheyensis (strain DSM 14371 / CIP 107618 / JCM 11309 / KCTC 3954 / HTE831).